The chain runs to 421 residues: Serine--tRNA ligase (421 aa).

Residue 225 to 227 participates in L-serine binding; sequence TAE. ATP is bound by residues 256 to 258 and Val-272; that span reads RSE. An L-serine-binding site is contributed by Glu-279. Residue 345–348 participates in ATP binding; it reads ETHS. Thr-380 contributes to the L-serine binding site.

This sequence belongs to the class-II aminoacyl-tRNA synthetase family. Type-1 seryl-tRNA synthetase subfamily. Homodimer. A single tRNA molecule binds across the dimer.

Its subcellular location is the cytoplasm. The enzyme catalyses tRNA(Ser) + L-serine + ATP = L-seryl-tRNA(Ser) + AMP + diphosphate + H(+). It carries out the reaction tRNA(Sec) + L-serine + ATP = L-seryl-tRNA(Sec) + AMP + diphosphate + H(+). The protein operates within aminoacyl-tRNA biosynthesis; selenocysteinyl-tRNA(Sec) biosynthesis; L-seryl-tRNA(Sec) from L-serine and tRNA(Sec): step 1/1. Its function is as follows. Catalyzes the attachment of serine to tRNA(Ser). Is also probably able to aminoacylate tRNA(Sec) with serine, to form the misacylated tRNA L-seryl-tRNA(Sec), which will be further converted into selenocysteinyl-tRNA(Sec). This is Serine--tRNA ligase (serS) from Thermus thermophilus (strain ATCC BAA-163 / DSM 7039 / HB27).